The following is a 210-amino-acid chain: Large ribosomal subunit protein uL4 (210 aa).

Residues 46-89 (QGTASTLTRSEVRGGGRKPYKQKGTGRARQGSIRTPLRPGGGII) form a disordered region. Residues 60–71 (GGRKPYKQKGTG) show a composition bias toward basic residues.

Belongs to the universal ribosomal protein uL4 family. In terms of assembly, part of the 50S ribosomal subunit.

Its function is as follows. One of the primary rRNA binding proteins, this protein initially binds near the 5'-end of the 23S rRNA. It is important during the early stages of 50S assembly. It makes multiple contacts with different domains of the 23S rRNA in the assembled 50S subunit and ribosome. Functionally, forms part of the polypeptide exit tunnel. The polypeptide is Large ribosomal subunit protein uL4 (Prochlorococcus marinus (strain MIT 9215)).